Reading from the N-terminus, the 284-residue chain is uncharacterized protein (284 aa).

A compositionally biased stretch (polar residues) spans 1-10 (MSNSVTNFEM). Positions 1–28 (MSNSVTNFEMSSVLPGKKPCQGKNNESQ) are disordered.

This is an uncharacterized protein from Escherichia coli (strain K12).